The chain runs to 378 residues: Sperm microtubule associated protein 2 (378 aa).

Disordered stretches follow at residues 1–35 and 47–79; these read MGELGEHRSRSSLLSIPVLDTKTSGGSEYRESDGS and WLQSSQATTERNTDDPEEEIPPEEMVGEELPEV. Over residues 47–56 the composition is skewed to polar residues; it reads WLQSSQATTE. Over residues 61–77 the composition is skewed to acidic residues; the sequence is DPEEEIPPEEMVGEELP. 7 THEG repeats span residues 113–132, 179–198, 217–236, 253–272, 285–304, 321–340, and 355–374; these read AKCRKKKNHRLLELAKPKFN, TITVPEVSRRVEELSRPKRF, STLEYQASNRLKRLATPKIR, AAQMAVPTPRTLRLAKPRAP, PKPYVSDYNRLLQLATPKAL, VTKNAVASSRIISLAQPKIR, and ASLVAQASPRIYELAVPKHI. Position 290 is a phosphoserine (S290).

As to quaternary structure, interacts with CCT5.

Its subcellular location is the nucleus. Its function is as follows. May be involved (but not essential) in spermatogenesis. In Rattus norvegicus (Rat), this protein is Sperm microtubule associated protein 2.